A 239-amino-acid polypeptide reads, in one-letter code: Proteasome activator complex subunit 2 (239 aa).

The residue at position 2 (Ala2) is an N-acetylalanine. Ser10 carries the phosphoserine modification. The tract at residues 65–87 is disordered; the sequence is DIPIPDPPPKDDEMETDKQEKKE. The segment covering 72–87 has biased composition (basic and acidic residues); the sequence is PPKDDEMETDKQEKKE.

Belongs to the PA28 family. As to quaternary structure, heterodimer of PSME1 and PSME2, which forms a hexameric ring.

Its function is as follows. Implicated in immunoproteasome assembly and required for efficient antigen processing. The PA28 activator complex enhances the generation of class I binding peptides by altering the cleavage pattern of the proteasome. This Mus musculus (Mouse) protein is Proteasome activator complex subunit 2 (Psme2).